The primary structure comprises 574 residues: Septation ring formation regulator EzrA (574 aa).

At 1–7 (MSSGLIL) the chain is on the extracellular side. A helical transmembrane segment spans residues 8–26 (LIVAIVLLVIIAYLVGVII). Residues 27 to 574 (RKRNDTLITS…YEKTRERIRF (548 aa)) are Cytoplasmic-facing. Coiled coils occupy residues 102-131 (NFIR…REAL), 161-190 (ENED…FVAL), 276-379 (VTLD…QQEK), and 459-493 (QLEA…NLEE).

The protein belongs to the EzrA family.

The protein localises to the cell membrane. Functionally, negative regulator of FtsZ ring formation; modulates the frequency and position of FtsZ ring formation. Inhibits FtsZ ring formation at polar sites. Interacts either with FtsZ or with one of its binding partners to promote depolymerization. The sequence is that of Septation ring formation regulator EzrA from Streptococcus equi subsp. zooepidemicus (strain MGCS10565).